A 207-amino-acid polypeptide reads, in one-letter code: Octanoyltransferase (207 aa).

A BPL/LPL catalytic domain is found at 27–202 (GETPDELWIV…HLETRLARPQ (176 aa)). Substrate contacts are provided by residues 66–73 (RGGQITYH), 133–135 (SLG), and 146–148 (GLS). Cys164 acts as the Acyl-thioester intermediate in catalysis.

It belongs to the LipB family.

Its subcellular location is the cytoplasm. It carries out the reaction octanoyl-[ACP] + L-lysyl-[protein] = N(6)-octanoyl-L-lysyl-[protein] + holo-[ACP] + H(+). It participates in protein modification; protein lipoylation via endogenous pathway; protein N(6)-(lipoyl)lysine from octanoyl-[acyl-carrier-protein]: step 1/2. Its function is as follows. Catalyzes the transfer of endogenously produced octanoic acid from octanoyl-acyl-carrier-protein onto the lipoyl domains of lipoate-dependent enzymes. Lipoyl-ACP can also act as a substrate although octanoyl-ACP is likely to be the physiological substrate. This is Octanoyltransferase from Laribacter hongkongensis (strain HLHK9).